The sequence spans 103 residues: G0/G1 switch protein 2 (103 aa).

As to quaternary structure, directly interacts with BCL2; this interaction prevents the formation of the anti-apoptotic BAX-BCL2 complex.

Its subcellular location is the mitochondrion. In terms of biological role, promotes apoptosis by binding to BCL2, hence preventing the formation of protective BCL2-BAX heterodimers. The sequence is that of G0/G1 switch protein 2 (G0s2) from Rattus norvegicus (Rat).